Here is a 379-residue protein sequence, read N- to C-terminus: MTTSTGKINLLGLTLAEMEQFFDSIGEKRFRAGQVMKWIHHFGVDDFAAMTNVGKVLREKLEAVAEIRGPEVVSEDISADGTRKWVVRVASGSCVETVYIPTDDRGTLCVSSQAGCALDCSFCSTGKQGFNSNLTAAEVIGQVWLANKSFGTVPAKIDRAITNVVMMGMGEPLLNFDNVIAAMKIMMEDLGYGISKRRVTLSTSGVVPMIDELAKHIDVSLALSLHAPNDELRNKLVPINKKYPLKMLLESCMGYMSTLGGKRVLTIEYTLLKDVNDQPEHAAQMIELLRDVPCKINLIPFNPFPHSGYERPSNNAIRRFQDLLHHGGFNVTTRTTRGDDIDAACGQLVGQVNDRTRRSERYIAVRQLADEPQDSAARP.

E96 (proton acceptor) is an active-site residue. The Radical SAM core domain occupies T102 to D342. A disulfide bond links C109 and C345. Residues C116, C120, and C123 each coordinate [4Fe-4S] cluster. S-adenosyl-L-methionine is bound by residues G170 to E171, S202, S224 to H226, and N302. Catalysis depends on C345, which acts as the S-methylcysteine intermediate.

The protein belongs to the radical SAM superfamily. RlmN family. [4Fe-4S] cluster is required as a cofactor.

The protein localises to the cytoplasm. It carries out the reaction adenosine(2503) in 23S rRNA + 2 reduced [2Fe-2S]-[ferredoxin] + 2 S-adenosyl-L-methionine = 2-methyladenosine(2503) in 23S rRNA + 5'-deoxyadenosine + L-methionine + 2 oxidized [2Fe-2S]-[ferredoxin] + S-adenosyl-L-homocysteine. The enzyme catalyses adenosine(37) in tRNA + 2 reduced [2Fe-2S]-[ferredoxin] + 2 S-adenosyl-L-methionine = 2-methyladenosine(37) in tRNA + 5'-deoxyadenosine + L-methionine + 2 oxidized [2Fe-2S]-[ferredoxin] + S-adenosyl-L-homocysteine. Its function is as follows. Specifically methylates position 2 of adenine 2503 in 23S rRNA and position 2 of adenine 37 in tRNAs. m2A2503 modification seems to play a crucial role in the proofreading step occurring at the peptidyl transferase center and thus would serve to optimize ribosomal fidelity. The sequence is that of Dual-specificity RNA methyltransferase RlmN from Pseudomonas entomophila (strain L48).